The chain runs to 191 residues: GDP-mannose pyrophosphatase (191 aa).

GDP-alpha-D-mannose is bound by residues Tyr-17, 38-40 (KRE), Arg-67, and 85-87 (AGL). Residues 43 to 180 (DRGNGATILL…EIRDGKTVLL (138 aa)) form the Nudix hydrolase domain. Positions 85, 100, and 104 each coordinate Mg(2+). The Nudix box motif lies at 86–106 (GLLDNDEPEVCIRKEAIEETG). GDP-alpha-D-mannose-binding positions include Glu-104, Glu-127, 150 to 151 (DE), and Lys-176. Glu-151 is a binding site for Mg(2+).

The protein belongs to the Nudix hydrolase family. NudK subfamily. Homodimer. Requires Mg(2+) as cofactor.

The enzyme catalyses GDP-alpha-D-mannose + H2O = alpha-D-mannose 1-phosphate + GMP + 2 H(+). Functionally, nucleoside diphosphate sugar hydrolase that hydrolyzes GDP-mannose as its preferred substrate, yielding GMP and mannose-1-phosphate. The sequence is that of GDP-mannose pyrophosphatase (nudK) from Salmonella typhi.